Here is a 630-residue protein sequence, read N- to C-terminus: Chaperone protein HtpG (630 aa).

The interval 1 to 339 (MKGQETRGFQ…SNDLPLNVSR (339 aa)) is a; substrate-binding. Residues 340-555 (EILQDNSITR…VDEMSTQMAK (216 aa)) are b. Positions 556–630 (LFAAAGQQVP…MNQLLLSEKA (75 aa)) are c.

It belongs to the heat shock protein 90 family. Homodimer.

The protein resides in the cytoplasm. Its function is as follows. Molecular chaperone. Has ATPase activity. This Photorhabdus laumondii subsp. laumondii (strain DSM 15139 / CIP 105565 / TT01) (Photorhabdus luminescens subsp. laumondii) protein is Chaperone protein HtpG.